The following is a 152-amino-acid chain: Ribonuclease pancreatic beta-type (152 aa).

Positions Met-1–Ser-25 are cleaved as a signal peptide. The interval Ser-25–Tyr-53 is disordered. Over residues Glu-27–Ser-45 the composition is skewed to basic and acidic residues. Positions 35 and 38 each coordinate substrate. Residue His-40 is the Proton acceptor of the active site. Intrachain disulfides connect Cys-54–Cys-112, Cys-68–Cys-123, Cys-86–Cys-138, and Cys-93–Cys-100. Substrate-binding positions include Lys-69–Thr-73 and Lys-94. His-147 (proton donor) is an active-site residue.

Belongs to the pancreatic ribonuclease family. In terms of assembly, monomer.

Its subcellular location is the secreted. The enzyme catalyses an [RNA] containing cytidine + H2O = an [RNA]-3'-cytidine-3'-phosphate + a 5'-hydroxy-ribonucleotide-3'-[RNA].. It catalyses the reaction an [RNA] containing uridine + H2O = an [RNA]-3'-uridine-3'-phosphate + a 5'-hydroxy-ribonucleotide-3'-[RNA].. Functionally, endonuclease that catalyzes the cleavage of RNA on the 3' side of pyrimidine nucleotides. Acts on single-stranded and double-stranded RNA. This is Ribonuclease pancreatic beta-type from Rattus tiomanicus (Malayan field rat).